The primary structure comprises 486 residues: Ribosomal RNA small subunit methyltransferase F (486 aa).

S-adenosyl-L-methionine-binding positions include 124 to 130, E148, D175, and D193; that span reads ASAPGSK. Catalysis depends on C246, which acts as the Nucleophile.

This sequence belongs to the class I-like SAM-binding methyltransferase superfamily. RsmB/NOP family.

It is found in the cytoplasm. It carries out the reaction cytidine(1407) in 16S rRNA + S-adenosyl-L-methionine = 5-methylcytidine(1407) in 16S rRNA + S-adenosyl-L-homocysteine + H(+). In terms of biological role, specifically methylates the cytosine at position 1407 (m5C1407) of 16S rRNA. In Shewanella baltica (strain OS223), this protein is Ribosomal RNA small subunit methyltransferase F.